Reading from the N-terminus, the 545-residue chain is Chaperonin GroEL 1 (545 aa).

ATP-binding positions include 29–32 (TLGP), 86–90 (DGTTT), Gly-413, 479–481 (DAA), and Asp-495. The segment at 525-545 (PEPKENNPAGSGAGMGGDFDY) is disordered. Positions 535–545 (SGAGMGGDFDY) are enriched in gly residues.

This sequence belongs to the chaperonin (HSP60) family. As to quaternary structure, forms a cylinder of 14 subunits composed of two heptameric rings stacked back-to-back. Interacts with the co-chaperonin GroES.

It localises to the cytoplasm. The enzyme catalyses ATP + H2O + a folded polypeptide = ADP + phosphate + an unfolded polypeptide.. Together with its co-chaperonin GroES, plays an essential role in assisting protein folding. The GroEL-GroES system forms a nano-cage that allows encapsulation of the non-native substrate proteins and provides a physical environment optimized to promote and accelerate protein folding. This Thermosynechococcus vestitus (strain NIES-2133 / IAM M-273 / BP-1) protein is Chaperonin GroEL 1.